The sequence spans 246 residues: Probable transcriptional regulatory protein PM0980 (246 aa).

It belongs to the TACO1 family.

It localises to the cytoplasm. The chain is Probable transcriptional regulatory protein PM0980 from Pasteurella multocida (strain Pm70).